Here is a 292-residue protein sequence, read N- to C-terminus: Elongation factor Ts (292 aa).

Positions 81-84 (TDFV) are involved in Mg(2+) ion dislocation from EF-Tu.

It belongs to the EF-Ts family.

The protein localises to the cytoplasm. Functionally, associates with the EF-Tu.GDP complex and induces the exchange of GDP to GTP. It remains bound to the aminoacyl-tRNA.EF-Tu.GTP complex up to the GTP hydrolysis stage on the ribosome. The sequence is that of Elongation factor Ts from Psychromonas ingrahamii (strain DSM 17664 / CCUG 51855 / 37).